The chain runs to 270 residues: Imidazole glycerol phosphate synthase subunit HisF (270 aa).

Residues Asp-11 and Asp-130 contribute to the active site.

Belongs to the HisA/HisF family. In terms of assembly, heterodimer of HisH and HisF.

It localises to the cytoplasm. It carries out the reaction 5-[(5-phospho-1-deoxy-D-ribulos-1-ylimino)methylamino]-1-(5-phospho-beta-D-ribosyl)imidazole-4-carboxamide + L-glutamine = D-erythro-1-(imidazol-4-yl)glycerol 3-phosphate + 5-amino-1-(5-phospho-beta-D-ribosyl)imidazole-4-carboxamide + L-glutamate + H(+). The protein operates within amino-acid biosynthesis; L-histidine biosynthesis; L-histidine from 5-phospho-alpha-D-ribose 1-diphosphate: step 5/9. Functionally, IGPS catalyzes the conversion of PRFAR and glutamine to IGP, AICAR and glutamate. The HisF subunit catalyzes the cyclization activity that produces IGP and AICAR from PRFAR using the ammonia provided by the HisH subunit. The protein is Imidazole glycerol phosphate synthase subunit HisF of Sorangium cellulosum (strain So ce56) (Polyangium cellulosum (strain So ce56)).